The sequence spans 385 residues: Endoglucanase 1 (385 aa).

The signal sequence occupies residues 1–17 (MKLVFSALASLLSGASA). 2 N-linked (GlcNAc...) asparagine glycosylation sites follow: asparagine 93 and asparagine 140. Glutamate 176 functions as the Proton donor in the catalytic mechanism. Asparagine 200 and asparagine 237 each carry an N-linked (GlcNAc...) asparagine glycan. Glutamate 284 acts as the Nucleophile in catalysis. N-linked (GlcNAc...) asparagine glycosylation is found at asparagine 289 and asparagine 331.

The protein belongs to the glycosyl hydrolase 5 (cellulase A) family.

The enzyme catalyses Endohydrolysis of (1-&gt;4)-beta-D-glucosidic linkages in cellulose, lichenin and cereal beta-D-glucans.. Its pathway is glycan metabolism; cellulose degradation. Its function is as follows. Active towards carboxymethyl cellulose. In Robillarda sp. (strain Y-20), this protein is Endoglucanase 1 (eg 1).